Consider the following 251-residue polypeptide: Urease accessory protein UreF (251 aa).

The disordered stretch occupies residues 1–20 (MAPAPDPAPAGSAAPDPASA). The span at 9 to 20 (PAGSAAPDPASA) shows a compositional bias: low complexity.

It belongs to the UreF family. UreD, UreF and UreG form a complex that acts as a GTP-hydrolysis-dependent molecular chaperone, activating the urease apoprotein by helping to assemble the nickel containing metallocenter of UreC. The UreE protein probably delivers the nickel.

It is found in the cytoplasm. In terms of biological role, required for maturation of urease via the functional incorporation of the urease nickel metallocenter. The chain is Urease accessory protein UreF from Paracidovorax citrulli (strain AAC00-1) (Acidovorax citrulli).